Consider the following 530-residue polypeptide: Portal protein (530 aa).

The protein belongs to the siphoviridae portal protein family. In terms of assembly, homododecamer. Interacts with the terminase complex composed of two small and one large terminase subunits. Proteolytically cleaved by the viral protease during capsid maturation.

It localises to the virion. Its function is as follows. Forms the portal vertex of the capsid. This portal plays critical roles in head assembly, genome packaging, neck/tail attachment, and genome ejection. The portal protein multimerizes as a single ring-shaped homododecamer arranged around a central channel. Binds to the terminase subunits to form the packaging machine. The chain is Portal protein from Escherichia phage N15 (Bacteriophage N15).